Consider the following 456-residue polypeptide: UDP-N-acetylmuramate--L-alanine ligase (456 aa).

An ATP-binding site is contributed by 114-120 (GTHGKTT).

Belongs to the MurCDEF family.

The protein resides in the cytoplasm. The catalysed reaction is UDP-N-acetyl-alpha-D-muramate + L-alanine + ATP = UDP-N-acetyl-alpha-D-muramoyl-L-alanine + ADP + phosphate + H(+). It participates in cell wall biogenesis; peptidoglycan biosynthesis. In terms of biological role, cell wall formation. This Porphyromonas gingivalis (strain ATCC BAA-308 / W83) protein is UDP-N-acetylmuramate--L-alanine ligase (murC).